The chain runs to 583 residues: Inactive tyrosine-protein kinase RYK (583 aa).

The first 18 residues, 1 to 18, serve as a signal peptide directing secretion; sequence MILRYLIFFAQLWALCLA. At 19–173 the chain is on the extracellular side; the sequence is NVNMFISKEE…EVDDTDSIDK (155 aa). The 126-residue stretch at 22–147 folds into the WIF domain; sequence MFISKEEMNR…KVKLRQEKIC (126 aa). N-linked (GlcNAc...) asparagine glycosylation is found at N30 and N46. The cysteines at positions 113 and 147 are disulfide-linked. Residues 174 to 194 traverse the membrane as a helical segment; sequence AFFVIICIAAAFLLIVAATLI. Residues 195-583 lie on the Cytoplasmic side of the membrane; the sequence is CYFKRSKKED…DFNIQLSQYI (389 aa). The region spanning 281-583 is the Protein kinase domain; that stretch reads FQSLPLDMEG…DFNIQLSQYI (303 aa). ATP is bound by residues 287–295 and K327; that span reads DMEGTFGEV.

It belongs to the protein kinase superfamily. Tyr protein kinase family.

It is found in the cell membrane. It localises to the basolateral cell membrane. Its function is as follows. Has no detectable kinase activity in vitro and is unlikely to function as a tyrosine kinase in vivo. Receptor which may act as a receptor for Wnt ligand mom-2. Plays a role in controlling P7.p vulva precursor cell lineage orientation during vulva development. Regulates pop-1 asymmetric distribution in P7.p and its daughter cells. Plays a role in the migration of ALM neurons during embryogenesis. The chain is Inactive tyrosine-protein kinase RYK from Caenorhabditis elegans.